An 838-amino-acid polypeptide reads, in one-letter code: AP-4 complex subunit beta (838 aa).

The interval 582-673 (NSSKQTTSIN…NQNNNQNNNQ (92 aa)) is hinge. The tract at residues 648–683 (ITDGNQNNNQNNNQNNNQNNNQNNNQNNQNNNNQNN) is disordered. Low complexity predominate over residues 652–683 (NQNNNQNNNQNNNQNNNQNNNQNNQNNNNQNN). Residues 674–838 (NNQNNNNQNN…LSIPIPKIFN (165 aa)) are ear.

The protein belongs to the adaptor complexes large subunit family. As to quaternary structure, may be part of the adaptor protein complex 4 (AP-4), a heterotetramer composed of two large adaptins (epsilon-type subunitand beta-type subunit), a medium adaptin (mu-type subunit) and a small adaptin (sigma-type).

It localises to the golgi apparatus. Its subcellular location is the trans-Golgi network membrane. Functionally, probable component of an adaptor protein complex. Adaptor protein complexes are vesicle coat components involved both in vesicle formation and cargo selection. They control the vesicular transport of proteins in different trafficking pathways. This Dictyostelium discoideum (Social amoeba) protein is AP-4 complex subunit beta (ap4b1).